Consider the following 728-residue polypeptide: Elongation factor 2 (728 aa).

The region spanning 19–261 (EHIRNIAIAA…MVCEHFPNPV (243 aa)) is the tr-type G domain. Residues 28 to 35 (AHVDHGKT), 94 to 98 (DTPGH), and 148 to 151 (NKVD) each bind GTP. H596 is modified (diphthamide).

This sequence belongs to the TRAFAC class translation factor GTPase superfamily. Classic translation factor GTPase family. EF-G/EF-2 subfamily.

The protein localises to the cytoplasm. In terms of biological role, catalyzes the GTP-dependent ribosomal translocation step during translation elongation. During this step, the ribosome changes from the pre-translocational (PRE) to the post-translocational (POST) state as the newly formed A-site-bound peptidyl-tRNA and P-site-bound deacylated tRNA move to the P and E sites, respectively. Catalyzes the coordinated movement of the two tRNA molecules, the mRNA and conformational changes in the ribosome. The chain is Elongation factor 2 from Haloarcula marismortui (strain ATCC 43049 / DSM 3752 / JCM 8966 / VKM B-1809) (Halobacterium marismortui).